The sequence spans 37 residues: Cytochrome b6-f complex subunit 5 (37 aa).

The helical transmembrane segment at 5–25 threads the bilayer; it reads LLFGIVLGLIPVTLVGLFVAA.

This sequence belongs to the PetG family. The 4 large subunits of the cytochrome b6-f complex are cytochrome b6, subunit IV (17 kDa polypeptide, PetD), cytochrome f and the Rieske protein, while the 4 small subunits are PetG, PetL, PetM and PetN. The complex functions as a dimer.

It localises to the plastid. Its subcellular location is the chloroplast thylakoid membrane. Functionally, component of the cytochrome b6-f complex, which mediates electron transfer between photosystem II (PSII) and photosystem I (PSI), cyclic electron flow around PSI, and state transitions. PetG is required for either the stability or assembly of the cytochrome b6-f complex. This Rhodomonas salina (Cryptomonas salina) protein is Cytochrome b6-f complex subunit 5.